An 876-amino-acid chain; its full sequence is Alanine--tRNA ligase (876 aa).

N6-acetyllysine is present on K74. 4 residues coordinate Zn(2+): H564, H568, C666, and H670.

The protein belongs to the class-II aminoacyl-tRNA synthetase family. As to quaternary structure, homotetramer. Requires Zn(2+) as cofactor.

It is found in the cytoplasm. The catalysed reaction is tRNA(Ala) + L-alanine + ATP = L-alanyl-tRNA(Ala) + AMP + diphosphate. In terms of biological role, catalyzes the attachment of alanine to tRNA(Ala) in a two-step reaction: alanine is first activated by ATP to form Ala-AMP and then transferred to the acceptor end of tRNA(Ala). Also edits incorrectly charged Ser-tRNA(Ala) and Gly-tRNA(Ala) via its editing domain. This chain is Alanine--tRNA ligase, found in Escherichia coli O9:H4 (strain HS).